The chain runs to 224 residues: Ribonuclease 3 (224 aa).

The region spanning 5 to 127 is the RNase III domain; sequence LERLCRRLNY…ILAAIYLDGG (123 aa). E40 contacts Mg(2+). The active site involves D44. The Mg(2+) site is built by D113 and E116. Residue E116 is part of the active site. The DRBM domain occupies 154–224; it reads DAKTQLQEFL…AKAMLEQLQG (71 aa).

This sequence belongs to the ribonuclease III family. Homodimer. It depends on Mg(2+) as a cofactor.

The protein resides in the cytoplasm. It carries out the reaction Endonucleolytic cleavage to 5'-phosphomonoester.. Its function is as follows. Digests double-stranded RNA. Involved in the processing of primary rRNA transcript to yield the immediate precursors to the large and small rRNAs (23S and 16S). Processes some mRNAs, and tRNAs when they are encoded in the rRNA operon. Processes pre-crRNA and tracrRNA of type II CRISPR loci if present in the organism. This Legionella pneumophila (strain Lens) protein is Ribonuclease 3.